A 715-amino-acid polypeptide reads, in one-letter code: Fatty acid oxidation complex subunit alpha (715 aa).

Positions 1–190 (MIYQGKAITV…KVGAVDAVVA (190 aa)) are enoyl-CoA hydratase/isomerase. Asp297 serves as a coordination point for substrate. The segment at 312–715 (KDVKLAAVLG…MAKNGQKFFG (404 aa)) is 3-hydroxyacyl-CoA dehydrogenase. Residues Met325, Asp344, 401–403 (VVE), Lys408, and Ser430 contribute to the NAD(+) site. His451 (for 3-hydroxyacyl-CoA dehydrogenase activity) is an active-site residue. Asn454 serves as a coordination point for NAD(+). Asn501 and Tyr660 together coordinate substrate.

This sequence in the N-terminal section; belongs to the enoyl-CoA hydratase/isomerase family. The protein in the C-terminal section; belongs to the 3-hydroxyacyl-CoA dehydrogenase family. Heterotetramer of two alpha chains (FadB) and two beta chains (FadA).

The catalysed reaction is a (3S)-3-hydroxyacyl-CoA + NAD(+) = a 3-oxoacyl-CoA + NADH + H(+). It carries out the reaction a (3S)-3-hydroxyacyl-CoA = a (2E)-enoyl-CoA + H2O. The enzyme catalyses a 4-saturated-(3S)-3-hydroxyacyl-CoA = a (3E)-enoyl-CoA + H2O. It catalyses the reaction (3S)-3-hydroxybutanoyl-CoA = (3R)-3-hydroxybutanoyl-CoA. The catalysed reaction is a (3Z)-enoyl-CoA = a 4-saturated (2E)-enoyl-CoA. It carries out the reaction a (3E)-enoyl-CoA = a 4-saturated (2E)-enoyl-CoA. It functions in the pathway lipid metabolism; fatty acid beta-oxidation. Functionally, involved in the aerobic and anaerobic degradation of long-chain fatty acids via beta-oxidation cycle. Catalyzes the formation of 3-oxoacyl-CoA from enoyl-CoA via L-3-hydroxyacyl-CoA. It can also use D-3-hydroxyacyl-CoA and cis-3-enoyl-CoA as substrate. The chain is Fatty acid oxidation complex subunit alpha from Pseudomonas paraeruginosa (strain DSM 24068 / PA7) (Pseudomonas aeruginosa (strain PA7)).